The sequence spans 1025 residues: Beta-galactosidase (1025 aa).

Positions 103 and 202 each coordinate substrate. D202 contacts Na(+). E417, H419, and E462 together coordinate Mg(2+). Residues E462 and 538-541 (EYAH) each bind substrate. The active-site Proton donor is E462. The Nucleophile role is filled by E538. Mg(2+) is bound at residue N598. Residues F602 and N605 each contribute to the Na(+) site. Positions 605 and 1003 each coordinate substrate.

This sequence belongs to the glycosyl hydrolase 2 family. In terms of assembly, homotetramer. Mg(2+) is required as a cofactor. It depends on Na(+) as a cofactor.

It catalyses the reaction Hydrolysis of terminal non-reducing beta-D-galactose residues in beta-D-galactosides.. This is Beta-galactosidase from Citrobacter koseri (strain ATCC BAA-895 / CDC 4225-83 / SGSC4696).